The following is a 561-amino-acid chain: Thymidine kinase (561 aa).

Polar residues-rich tracts occupy residues 1-14 (MASN…TPRR) and 112-122 (LSSSNTASGLR). Disordered regions lie at residues 1–22 (MASN…VPKA) and 34–122 (FLTQ…SGLR). 245–252 (GCMAAGKT) lines the ATP pocket. Glu-272 acts as the Proton acceptor in catalysis. Gln-310 provides a ligand contact to substrate. Arg-400 contacts ATP. Substrate is bound at residue Arg-406.

Belongs to the herpesviridae thymidine kinase family. As to quaternary structure, homodimer.

It carries out the reaction thymidine + ATP = dTMP + ADP + H(+). In terms of biological role, catalyzes the transfer of the gamma-phospho group of ATP to thymidine to generate dTMP in the salvage pathway of pyrimidine synthesis. The dTMP serves as a substrate for DNA polymerase during viral DNA replication. Allows the virus to be reactivated and to grow in non-proliferative cells lacking a high concentration of phosphorylated nucleic acid precursors. This chain is Thymidine kinase, found in Connochaetes taurinus (Blue wildebeest).